The chain runs to 203 residues: ATP-dependent dethiobiotin synthetase BioD (203 aa).

Position 11-16 (Asn11–Ile16) interacts with ATP. Thr15 contributes to the Mg(2+) binding site. Residue Lys31 is part of the active site. Residue Thr35 coordinates substrate. ATP is bound by residues Asp42 and Glu94–Gly97. 2 residues coordinate Mg(2+): Asp42 and Glu94.

The protein belongs to the dethiobiotin synthetase family. As to quaternary structure, homodimer. The cofactor is Mg(2+).

It is found in the cytoplasm. The catalysed reaction is (7R,8S)-7,8-diammoniononanoate + CO2 + ATP = (4R,5S)-dethiobiotin + ADP + phosphate + 3 H(+). Its pathway is cofactor biosynthesis; biotin biosynthesis; biotin from 7,8-diaminononanoate: step 1/2. Its function is as follows. Catalyzes a mechanistically unusual reaction, the ATP-dependent insertion of CO2 between the N7 and N8 nitrogen atoms of 7,8-diaminopelargonic acid (DAPA, also called 7,8-diammoniononanoate) to form a ureido ring. The protein is ATP-dependent dethiobiotin synthetase BioD of Lawsonia intracellularis (strain PHE/MN1-00).